The sequence spans 531 residues: tRNA-2-methylthio-N(6)-dimethylallyladenosine synthase (531 aa).

The disordered stretch occupies residues 1-26 (MNEKQRLEQTGQIKTESHPADRKSAL). A compositionally biased stretch (basic and acidic residues) spans 15–26 (TESHPADRKSAL). Positions 80–198 (RKFYIRTYGC…LPYILHEAYM (119 aa)) constitute an MTTase N-terminal domain. Positions 89, 125, 159, 235, 239, and 242 each coordinate [4Fe-4S] cluster. The 231-residue stretch at 221–451 (RKGKIKAWVN…NDLVQEIAAK (231 aa)) folds into the Radical SAM core domain. Residues 454–517 (KQYEGQVVEV…TWTLTGELVN (64 aa)) form the TRAM domain.

The protein belongs to the methylthiotransferase family. MiaB subfamily. As to quaternary structure, monomer. The cofactor is [4Fe-4S] cluster.

Its subcellular location is the cytoplasm. It catalyses the reaction N(6)-dimethylallyladenosine(37) in tRNA + (sulfur carrier)-SH + AH2 + 2 S-adenosyl-L-methionine = 2-methylsulfanyl-N(6)-dimethylallyladenosine(37) in tRNA + (sulfur carrier)-H + 5'-deoxyadenosine + L-methionine + A + S-adenosyl-L-homocysteine + 2 H(+). Functionally, catalyzes the methylthiolation of N6-(dimethylallyl)adenosine (i(6)A), leading to the formation of 2-methylthio-N6-(dimethylallyl)adenosine (ms(2)i(6)A) at position 37 in tRNAs that read codons beginning with uridine. This chain is tRNA-2-methylthio-N(6)-dimethylallyladenosine synthase, found in Geobacillus kaustophilus (strain HTA426).